Reading from the N-terminus, the 397-residue chain is Cysteine desulfurase IscS (397 aa).

Pyridoxal 5'-phosphate contacts are provided by residues Gly-72–Ser-73, Asn-152, Gln-180, and Ser-200–His-202. The residue at position 203 (Lys-203) is an N6-(pyridoxal phosphate)lysine. Thr-238 serves as a coordination point for pyridoxal 5'-phosphate. Cys-328 serves as the catalytic Cysteine persulfide intermediate. Residue Cys-328 coordinates [2Fe-2S] cluster.

Belongs to the class-V pyridoxal-phosphate-dependent aminotransferase family. NifS/IscS subfamily. Homodimer. Forms a heterotetramer with IscU, interacts with other sulfur acceptors. It depends on pyridoxal 5'-phosphate as a cofactor.

It localises to the cytoplasm. It carries out the reaction (sulfur carrier)-H + L-cysteine = (sulfur carrier)-SH + L-alanine. The protein operates within cofactor biosynthesis; iron-sulfur cluster biosynthesis. Its function is as follows. Master enzyme that delivers sulfur to a number of partners involved in Fe-S cluster assembly, tRNA modification or cofactor biosynthesis. Catalyzes the removal of elemental sulfur atoms from cysteine to produce alanine. Functions as a sulfur delivery protein for Fe-S cluster synthesis onto IscU, an Fe-S scaffold assembly protein, as well as other S acceptor proteins. In Clostridium botulinum (strain ATCC 19397 / Type A), this protein is Cysteine desulfurase IscS.